The sequence spans 227 residues: Ribose-5-phosphate isomerase A (227 aa).

Substrate is bound by residues 26–29, 82–85, and 95–98; these read TGST, DGAD, and KGGG. The active-site Proton acceptor is the Glu104. A substrate-binding site is contributed by Lys122.

Belongs to the ribose 5-phosphate isomerase family. Homodimer.

The enzyme catalyses aldehydo-D-ribose 5-phosphate = D-ribulose 5-phosphate. The protein operates within carbohydrate degradation; pentose phosphate pathway; D-ribose 5-phosphate from D-ribulose 5-phosphate (non-oxidative stage): step 1/1. Its function is as follows. Catalyzes the reversible conversion of ribose-5-phosphate to ribulose 5-phosphate. This chain is Ribose-5-phosphate isomerase A, found in Streptococcus pneumoniae (strain ATCC 700669 / Spain 23F-1).